A 380-amino-acid polypeptide reads, in one-letter code: Cytochrome b (380 aa).

The next 4 helical transmembrane spans lie at 34–54 (FGSLLGICLATQILTGLLLAA), 78–99 (WLIRNLHANGASFFFICIYLHI), 114–134 (WNTGVILLLTLMATAFVGYVL), and 179–199 (FFTLHFLLPFMIMGLTLIHLT). Residues H84 and H98 each coordinate heme b. Residues H183 and H197 each contribute to the heme b site. Residue H202 participates in a ubiquinone binding. 4 consecutive transmembrane segments (helical) span residues 227–247 (LKDILGFMLMLFPLMTLALFS), 289–309 (LGGVLALAASVLILFLAPLLH), 321–341 (FSQLLFWTLAANLLILTWVGS), and 348–368 (FIIIGQLASLTYFTILLILFP).

It belongs to the cytochrome b family. The cytochrome bc1 complex contains 11 subunits: 3 respiratory subunits (MT-CYB, CYC1 and UQCRFS1), 2 core proteins (UQCRC1 and UQCRC2) and 6 low-molecular weight proteins (UQCRH/QCR6, UQCRB/QCR7, UQCRQ/QCR8, UQCR10/QCR9, UQCR11/QCR10 and a cleavage product of UQCRFS1). This cytochrome bc1 complex then forms a dimer. Requires heme b as cofactor.

Its subcellular location is the mitochondrion inner membrane. Functionally, component of the ubiquinol-cytochrome c reductase complex (complex III or cytochrome b-c1 complex) that is part of the mitochondrial respiratory chain. The b-c1 complex mediates electron transfer from ubiquinol to cytochrome c. Contributes to the generation of a proton gradient across the mitochondrial membrane that is then used for ATP synthesis. The polypeptide is Cytochrome b (MT-CYB) (Antigone vipio (White-naped crane)).